The following is a 354-amino-acid chain: Rhodopsin (354 aa).

Over 1–36 (MNGTEGPNFYVPMSNKTGIVRSPFEYPQYYLAEPWK) the chain is Extracellular. Asn2 and Asn15 each carry an N-linked (GlcNAc...) asparagine glycan. Residues 37-61 (YSVLAAYMFLLILLGLPINFMTLYV) traverse the membrane as a helical segment. The Cytoplasmic portion of the chain corresponds to 62–73 (TIQHKKLRTPLN). Residues 74–96 (YILLNLAFANHFMVLCGFTITMY) traverse the membrane as a helical segment. Over 97–110 (TSLHGYFVFGQTGC) the chain is Extracellular. Cys110 and Cys187 are oxidised to a cystine. A helical transmembrane segment spans residues 111 to 133 (YFEGFFATLGGEIALWSLVVLAI). The 'Ionic lock' involved in activated form stabilization motif lies at 134 to 136 (ERY). Over 134–152 (ERYIVVCKPMSNFRFGENH) the chain is Cytoplasmic. Residues 153 to 173 (AMMGVAFTWIMALACAVPPLF) form a helical membrane-spanning segment. Residues 174-202 (GWSRYIPEGMQCSCGVDYYTLKPEVNNES) are Extracellular-facing. The helical transmembrane segment at 203–224 (FVIYMFVVHFLIPLIIISFCYG) threads the bilayer. The Cytoplasmic segment spans residues 225–252 (RLVCTVKEAAAQQQESATTQKAEKEVTR). The chain crosses the membrane as a helical span at residues 253–274 (MVVIMVIFFLICWVPYAYVAFY). Topologically, residues 275–286 (IFTHQGSEFGPI) are extracellular. Residues 287–308 (FMTVPAFFAKSSAIYNPVIYIM) traverse the membrane as a helical segment. Lys296 is subject to N6-(retinylidene)lysine. The Cytoplasmic portion of the chain corresponds to 309-354 (LNKQFRNCMITTLCCGKNPFGDEDASSAATSKTEATSVSTSQVSPA). 2 S-palmitoyl cysteine lipidation sites follow: Cys322 and Cys323. Residues 331–354 (EDASSAATSKTEATSVSTSQVSPA) are disordered. Over residues 334-354 (SSAATSKTEATSVSTSQVSPA) the composition is skewed to low complexity.

The protein belongs to the G-protein coupled receptor 1 family. Opsin subfamily. Contains one covalently linked retinal chromophore. Upon light absorption, the covalently bound 11-cis-retinal is converted to all-trans-retinal. After hydrolysis of the Schiff base and release of the covalently bound all-trans-retinal, active rhodopsin is regenerated by binding of a fresh molecule of 11-cis-retinal. In terms of tissue distribution, retina. Localized in the ventral part of the retina.

It is found in the membrane. It localises to the cell projection. The protein localises to the cilium. Its subcellular location is the photoreceptor outer segment. Its function is as follows. Photoreceptor required for image-forming vision at low light intensity. Required for photoreceptor cell viability after birth. May use a mixture of retinal and 3-dehydroretinal as visual pigment. Light-induced isomerization of 11-cis to all-trans retinal triggers a conformational change that activates signaling via G-proteins. Subsequent receptor phosphorylation mediates displacement of the bound G-protein alpha subunit by arrestin and terminates signaling. This chain is Rhodopsin (RHO), found in Aquarana catesbeiana (American bullfrog).